Reading from the N-terminus, the 380-residue chain is GDSL esterase/lipase At3g26430 (380 aa).

The signal sequence occupies residues 1 to 25 (METNLLLVKCVLLASCLIHPRACSP). Ser38 acts as the Nucleophile in catalysis. Residues Asn97, Asn115, and Asn183 are each glycosylated (N-linked (GlcNAc...) asparagine). Active-site residues include Asp346 and His349.

Belongs to the 'GDSL' lipolytic enzyme family.

The protein localises to the secreted. It catalyses the reaction hexadecanoate ester + H2O = an aliphatic alcohol + hexadecanoate + H(+). The enzyme catalyses a butanoate ester + H2O = an aliphatic alcohol + butanoate + H(+). With respect to regulation, lipase activity is inhibited by phenylmethylsulfonyl fluoride (PMSF), but not neostigmine bromide (NB). Functionally, lipase that can hydrolyze p-nitrophenyl butyrate and p-nitrophenyl palmitate in vitro. Possesses low activity against p-nitrophenyl acetate. Substrate preference is p-nitrophenyl palmitate &gt; p-nitrophenyl butyrate &gt;&gt; p-nitrophenyl acetate. Lacks cholinesterase activity. The polypeptide is GDSL esterase/lipase At3g26430 (Arabidopsis thaliana (Mouse-ear cress)).